A 153-amino-acid chain; its full sequence is Large ribosomal subunit protein uL13 (153 aa).

This sequence belongs to the universal ribosomal protein uL13 family. Part of the 50S ribosomal subunit.

Its function is as follows. This protein is one of the early assembly proteins of the 50S ribosomal subunit, although it is not seen to bind rRNA by itself. It is important during the early stages of 50S assembly. This is Large ribosomal subunit protein uL13 from Methylobacterium sp. (strain 4-46).